The sequence spans 83 residues: Hepcidin (83 aa).

The first 23 residues, 1–23, serve as a signal peptide directing secretion; that stretch reads MALSTRTQAACLLLLLLASLSST. The propeptide occupies 24–53; that stretch reads TYLHQQMRQTTELQPLHGEESRADIAIPMQ. Intrachain disulfides connect Cys65/Cys81, Cys68/Cys71, Cys69/Cys77, and Cys72/Cys80.

It belongs to the hepcidin family. In terms of assembly, interacts with SLC40A1; this interaction promotes SLC40A1 rapid ubiquitination. In terms of tissue distribution, highly expressed in the liver and to a much lesser extent in the heart. Secreted in blood.

It is found in the secreted. Its function is as follows. Liver-produced hormone that constitutes the main circulating regulator of iron absorption and distribution across tissues. Acts by promoting endocytosis and degradation of SLC40A1, leading to the retention of iron in iron-exporting cells and decreased flow of iron into plasma. Controls the major flows of iron into plasma: absorption of dietary iron in the intestine, recycling of iron by macrophages, which phagocytose old erythrocytes and other cells, and mobilization of stored iron from hepatocytes. This chain is Hepcidin (Hamp), found in Mus musculus (Mouse).